The chain runs to 274 residues: Short-chain dehydrogenase/reductase bsc3 (274 aa).

Isoleucine 14, tyrosine 170, lysine 174, isoleucine 203, and threonine 205 together coordinate NADP(+). Tyrosine 170 functions as the Proton donor in the catalytic mechanism. Residue lysine 174 is the Lowers pKa of active site Tyr of the active site.

It belongs to the short-chain dehydrogenases/reductases (SDR) family.

Its pathway is mycotoxin biosynthesis. Its function is as follows. Short-chain dehydrogenase/reductase; part of the gene cluster that mediates the biosynthesis of the diterpene glucoside brassicicene C. In the first step of the brassicicene C biosynthesis, the bifunctional diterpene synthase bsc8 that possesses both prenyl transferase and terpene cyclase activity, converts isopentenyl diphosphate and dimethylallyl diphosphate into geranylgeranyl diphosphate (GGDP) that is further converted into fusicocca-2,10(14)-diene, the first precursor for brassicicene C. Fusicocca-2,10(14)-diene is then substrate of cytochrome P450 monooxygenase bsc1 for hydroxylation at the C-8 position. Oxidation at C-16 position to aldehyde is then catalyzed by the cytochrome P450 monooyxygenase bsc7, yielding fusicocca-2,10(14)-diene-8-beta,16-diol. Follows the isomerization of the double bond and reduction of aldehyde to alcohol catalyzed by the short-chain dehydrogenase/reductase bsc3 to yield the diol compound fusicocca-1,10(14)-diene-8 beta,16-diol. The next step is the oxidation at the C-3 position of fusicocca-2,10(14)-diene-8-beta,16-diol catalyzed by the alpha-ketoglutarate dependent dioxygenase bsc9, to produce a triol compound. Methylation of the hydroxy group at position 16 is performed by the methyltransferase bsc6. 16-O-methylation is followed by oxidation at the C-13 position to ketone and an alkyl shift of the methyl group leads to brassicicene C. Although the probable acetyltransferase bsc4 is included in the gene cluster, no acetylation reactions are necessary for brassicicene C biosynthesis. However, the fact that brassicicene E, which is a structurally related compound having an acetoxy group at position 12, was previously isolated from another strain of A.brassicicola suggests that the ATCC 96836 strain might also produce a small amount of brassicicene E. The sequence is that of Short-chain dehydrogenase/reductase bsc3 from Alternaria brassicicola (Dark leaf spot agent).